Consider the following 553-residue polypeptide: HTH-type transcriptional regulator SgrR (553 aa).

Residues 1–117 (MPSSRLQQQF…LSQIERRFRQ (117 aa)) enclose the HTH marR-type domain. The H-T-H motif DNA-binding region spans 26–49 (LQELANVLHCSKRHIRSLLNNMQK). Residues 163–494 (EPEADLAHHW…NDLSKEVSQW (332 aa)) form a solute-binding region.

In terms of biological role, activates the small RNA gene sgrS under glucose-phosphate stress conditions as well as yfdZ. Represses its own transcription under both stress and non-stress conditions. Might act as a sensor of the intracellular accumulation of phosphoglucose by binding these molecules in its C-terminal solute-binding domain. In Photorhabdus laumondii subsp. laumondii (strain DSM 15139 / CIP 105565 / TT01) (Photorhabdus luminescens subsp. laumondii), this protein is HTH-type transcriptional regulator SgrR.